A 480-amino-acid polypeptide reads, in one-letter code: Proline--tRNA ligase (480 aa).

Belongs to the class-II aminoacyl-tRNA synthetase family. ProS type 3 subfamily. As to quaternary structure, homodimer.

The protein localises to the cytoplasm. It carries out the reaction tRNA(Pro) + L-proline + ATP = L-prolyl-tRNA(Pro) + AMP + diphosphate. Its function is as follows. Catalyzes the attachment of proline to tRNA(Pro) in a two-step reaction: proline is first activated by ATP to form Pro-AMP and then transferred to the acceptor end of tRNA(Pro). This chain is Proline--tRNA ligase, found in Roseiflexus castenholzii (strain DSM 13941 / HLO8).